Reading from the N-terminus, the 406-residue chain is Tryptophan synthase beta chain (406 aa).

Lys-99 carries the N6-(pyridoxal phosphate)lysine modification.

It belongs to the TrpB family. Tetramer of two alpha and two beta chains. Requires pyridoxal 5'-phosphate as cofactor.

It catalyses the reaction (1S,2R)-1-C-(indol-3-yl)glycerol 3-phosphate + L-serine = D-glyceraldehyde 3-phosphate + L-tryptophan + H2O. The protein operates within amino-acid biosynthesis; L-tryptophan biosynthesis; L-tryptophan from chorismate: step 5/5. Functionally, the beta subunit is responsible for the synthesis of L-tryptophan from indole and L-serine. This is Tryptophan synthase beta chain from Brucella canis (strain ATCC 23365 / NCTC 10854 / RM-666).